The following is a 249-amino-acid chain: RNA polymerase sigma factor SigI3 (249 aa).

The Polymerase core binding motif lies at 60–73; it reads EEFSIGLAAFNEAI. The H-T-H motif DNA-binding region spans 199–218; it reads MKEVLSRIKVNHKTIQRNRK.

Belongs to the sigma-70 factor family. SigI subfamily. In terms of assembly, interacts with RsgI3.

It localises to the cytoplasm. Its activity is regulated as follows. Negatively regulated by the anti-sigma-I factor RsgI3. Binding of the polysaccharide substrate to RsgI3 may lead to the release and activation of SigI3. Sigma factors are initiation factors that promote the attachment of RNA polymerase to specific initiation sites and are then released. This sigma factor is involved in regulation of cellulosomal genes via an external polysaccharide-sensing mechanism. Recognizes the predicted promoters associated with sigI3 itself, pl11, ce12 and cipA. The polypeptide is RNA polymerase sigma factor SigI3 (Acetivibrio thermocellus (strain ATCC 27405 / DSM 1237 / JCM 9322 / NBRC 103400 / NCIMB 10682 / NRRL B-4536 / VPI 7372) (Clostridium thermocellum)).